The following is a 305-amino-acid chain: Membrane glycoprotein UL142 (305 aa).

The first 19 residues, 1–19 (MRIEWACWLFGYFVSSVGS), serve as a signal peptide directing secretion. Residues 20-270 (ERSLSYRYHL…QKTNNTTSPW (251 aa)) lie on the Lumenal side of the membrane. Residues 271–288 (VYAIPMGATATIGAGLYI) form a helical membrane-spanning segment. Residues 289 to 305 (GKHFTPVKFVYEVWRGQ) are Cytoplasmic-facing.

In terms of assembly, interacts with host MICA and ULBP3.

It localises to the host endoplasmic reticulum membrane. The protein resides in the host Golgi apparatus membrane. In terms of biological role, participates in the inhibition of the host immune response. Prevents host NK cell-mediated lysis of the infected cell by preventing the KLRK1 ligand 3/ULBP3 trafficking to the cell surface. Also retains another KLRK1 ligand, MHC class I-related chain A/MICA, in the Golgi apparatus to avoid its surface expression. The polypeptide is Membrane glycoprotein UL142 (UL142) (Homo sapiens (Human)).